The following is a 364-amino-acid chain: S-adenosylmethionine:tRNA ribosyltransferase-isomerase (364 aa).

It belongs to the QueA family. In terms of assembly, monomer.

It is found in the cytoplasm. The enzyme catalyses 7-aminomethyl-7-carbaguanosine(34) in tRNA + S-adenosyl-L-methionine = epoxyqueuosine(34) in tRNA + adenine + L-methionine + 2 H(+). It participates in tRNA modification; tRNA-queuosine biosynthesis. Transfers and isomerizes the ribose moiety from AdoMet to the 7-aminomethyl group of 7-deazaguanine (preQ1-tRNA) to give epoxyqueuosine (oQ-tRNA). The polypeptide is S-adenosylmethionine:tRNA ribosyltransferase-isomerase (Bradyrhizobium sp. (strain ORS 278)).